Here is a 336-residue protein sequence, read N- to C-terminus: Ferrochelatase (336 aa).

The Fe cation site is built by histidine 206 and glutamate 287.

It belongs to the ferrochelatase family.

The protein resides in the cytoplasm. The catalysed reaction is heme b + 2 H(+) = protoporphyrin IX + Fe(2+). The protein operates within porphyrin-containing compound metabolism; protoheme biosynthesis; protoheme from protoporphyrin-IX: step 1/1. Functionally, catalyzes the ferrous insertion into protoporphyrin IX. The sequence is that of Ferrochelatase from Neisseria meningitidis serogroup C / serotype 2a (strain ATCC 700532 / DSM 15464 / FAM18).